Reading from the N-terminus, the 324-residue chain is CYFIP-related Rac1 interactor B (324 aa).

G2 carries N-myristoyl glycine lipidation. K74 is covalently cross-linked (Glycyl lysine isopeptide (Lys-Gly) (interchain with G-Cter in ubiquitin)).

This sequence belongs to the CYRI family. In terms of assembly, interacts with RAC1 (GTP-bound form preferentially). In terms of processing, ubiquitinated at Lys-74 upon Salmonella bacterial infection. In terms of tissue distribution, expressed in pancreatic ducts (at protein level).

It localises to the membrane. Its subcellular location is the mitochondrion. Negatively regulates RAC1 signaling and RAC1-driven cytoskeletal remodeling. Regulates chemotaxis, cell migration and epithelial polarization by controlling the polarity, plasticity, duration and extent of protrusions. Limits Rac1 mediated activation of the Scar/WAVE complex, focuses protrusion signals and regulates pseudopod complexity by inhibiting Scar/WAVE-induced actin polymerization. Protects against Salmonella bacterial infection. Attenuates processes such as macropinocytosis, phagocytosis and cell migration and restrict sopE-mediated bacterial entry. Also restricts infection mediated by Mycobacterium tuberculosis and Listeria monocytogenes. Involved in the regulation of mitochondrial dynamics and oxidative stress. This is CYFIP-related Rac1 interactor B (Cyrib) from Mus musculus (Mouse).